Reading from the N-terminus, the 627-residue chain is DNA topoisomerase 4 subunit B (627 aa).

ATP is bound by residues tyrosine 4, asparagine 41, aspartate 68, 109–115 (GLHGVGV), and lysine 333. The Toprim domain occupies 412–525 (TELFIVEGDS…NGHIYIAQPP (114 aa)). Positions 418, 490, and 492 each coordinate Mg(2+).

The protein belongs to the type II topoisomerase family. ParE type 1 subfamily. Heterotetramer composed of ParC and ParE. Mg(2+) serves as cofactor. The cofactor is Mn(2+). Ca(2+) is required as a cofactor.

The catalysed reaction is ATP-dependent breakage, passage and rejoining of double-stranded DNA.. Pyrrolopyrimidines inhibit both GyrB and its paralog in topoisomerase IV (parE). Topoisomerase IV is essential for chromosome segregation. It relaxes supercoiled DNA. Performs the decatenation events required during the replication of a circular DNA molecule. The chain is DNA topoisomerase 4 subunit B from Francisella tularensis subsp. holarctica (strain LVS).